We begin with the raw amino-acid sequence, 131 residues long: D-ribose pyranase (131 aa).

The Proton donor role is filled by His20. Residues Asp28, His98, and 120–122 each bind substrate; that span reads YAN.

It belongs to the RbsD / FucU family. RbsD subfamily. In terms of assembly, homodecamer.

It is found in the cytoplasm. The catalysed reaction is beta-D-ribopyranose = beta-D-ribofuranose. It functions in the pathway carbohydrate metabolism; D-ribose degradation; D-ribose 5-phosphate from beta-D-ribopyranose: step 1/2. Catalyzes the interconversion of beta-pyran and beta-furan forms of D-ribose. This chain is D-ribose pyranase, found in Clostridium perfringens (strain SM101 / Type A).